Reading from the N-terminus, the 352-residue chain is tRNA N6-adenosine threonylcarbamoyltransferase (352 aa).

The Fe cation site is built by His-115 and His-119. Substrate-binding positions include 137 to 141 (LVSGG), Asp-170, Gly-183, and Asn-281. A Fe cation-binding site is contributed by Asp-309.

This sequence belongs to the KAE1 / TsaD family. It depends on Fe(2+) as a cofactor.

The protein localises to the cytoplasm. The enzyme catalyses L-threonylcarbamoyladenylate + adenosine(37) in tRNA = N(6)-L-threonylcarbamoyladenosine(37) in tRNA + AMP + H(+). Required for the formation of a threonylcarbamoyl group on adenosine at position 37 (t(6)A37) in tRNAs that read codons beginning with adenine. Is involved in the transfer of the threonylcarbamoyl moiety of threonylcarbamoyl-AMP (TC-AMP) to the N6 group of A37, together with TsaE and TsaB. TsaD likely plays a direct catalytic role in this reaction. The polypeptide is tRNA N6-adenosine threonylcarbamoyltransferase (Methylocapsa acidiphila).